The primary structure comprises 501 residues: Acetylcholine receptor subunit beta (501 aa).

Residues 1-23 form the signal peptide; that stretch reads MTPGALLMLLGALGAPLAPGVRG. Residues 24-244 lie on the Extracellular side of the membrane; the sequence is SEAEGRLREK…VIFYLIIRRK (221 aa). An intrachain disulfide couples Cys-151 to Cys-165. The N-linked (GlcNAc...) asparagine glycan is linked to Asn-164. 3 helical membrane-spanning segments follow: residues 245-269, 277-295, and 311-332; these read PLFY…VFYL, MGLS…LLLA, and YLMF…VLNL. The Cytoplasmic portion of the chain corresponds to 333–469; it reads HHRSPHTHQM…WQFVAMVVDR (137 aa). At Tyr-390 the chain carries Phosphotyrosine; by Tyr-kinases. Residues 470–488 form a helical membrane-spanning segment; it reads LFLWTFIIFTSVGTLVIFL.

Belongs to the ligand-gated ion channel (TC 1.A.9) family. Acetylcholine receptor (TC 1.A.9.1) subfamily. Beta-1/CHRNB1 sub-subfamily. In terms of assembly, pentamer of two alpha chains, and one each of the beta, delta, and gamma (in immature muscle) or epsilon (in mature muscle) chains. The muscle heteropentamer composed of alpha-1, beta-1, delta, epsilon subunits interacts with the alpha-conotoxin ImII.

The protein localises to the postsynaptic cell membrane. Its subcellular location is the cell membrane. The enzyme catalyses K(+)(in) = K(+)(out). The catalysed reaction is Na(+)(in) = Na(+)(out). In terms of biological role, after binding acetylcholine, the AChR responds by an extensive change in conformation that affects all subunits and leads to opening of an ion-conducting channel across the plasma membrane. In Homo sapiens (Human), this protein is Acetylcholine receptor subunit beta.